We begin with the raw amino-acid sequence, 674 residues long: ATP-citrate synthase subunit 1 (674 aa).

The segment covering 1–10 (MPSATSTNGA) has biased composition (low complexity). The tract at residues 1–26 (MPSATSTNGANGNGNGNGASASPAPG) is disordered. Residues 261-281 (LLRYQADPACKILVLLGEVGG) and 312-338 (FKTEVQFGHAGAFANSQLETAATKNKS) contribute to the ATP site. E278 is a Mg(2+) binding site. The Tele-phosphohistidine intermediate role is filled by H320. 339–349 (MREAGFYVPDT) is a binding site for CoA.

It belongs to the succinate/malate CoA ligase alpha subunit family. As to quaternary structure, composed of two subunits.

The protein resides in the cytoplasm. It catalyses the reaction oxaloacetate + acetyl-CoA + ADP + phosphate = citrate + ATP + CoA. Functionally, catalyzes the formation of cytosolic acetyl-CoA, which is mainly used for the biosynthesis of fatty acids and sterols. The sequence is that of ATP-citrate synthase subunit 1 (ACL1) from Sordaria macrospora (strain ATCC MYA-333 / DSM 997 / K(L3346) / K-hell).